Here is an 844-residue protein sequence, read N- to C-terminus: Meiotically up-regulated gene 61 protein (844 aa).

2 disordered regions span residues 333-354 (ENNS…PQSQ) and 384-415 (NFGL…EISS). Over residues 384–394 (NFGLEASNTST) the composition is skewed to polar residues. Residues 395–407 (PEKKKFDSQKPDD) show a composition bias toward basic and acidic residues. Residues 459 to 479 (VVNSLWLVLLVVPLLGFVGFW) form a helical membrane-spanning segment. 605 to 612 (AKNLNGKS) serves as a coordination point for ATP. The helical transmembrane segment at 705 to 725 (VISCWRIYLLIGILAAITGTV) threads the bilayer.

In terms of assembly, interacts with sad1.

It localises to the endoplasmic reticulum membrane. Its subcellular location is the nucleus membrane. Its function is as follows. Required for correct meiotic chromosome segregation. This chain is Meiotically up-regulated gene 61 protein (mug61), found in Schizosaccharomyces pombe (strain 972 / ATCC 24843) (Fission yeast).